The chain runs to 237 residues: tRNA (guanine-N(1)-)-methyltransferase (237 aa).

S-adenosyl-L-methionine contacts are provided by residues G113 and 133–138 (VGDFIV).

Belongs to the RNA methyltransferase TrmD family. Homodimer.

It is found in the cytoplasm. It catalyses the reaction guanosine(37) in tRNA + S-adenosyl-L-methionine = N(1)-methylguanosine(37) in tRNA + S-adenosyl-L-homocysteine + H(+). Its function is as follows. Specifically methylates guanosine-37 in various tRNAs. The chain is tRNA (guanine-N(1)-)-methyltransferase from Hydrogenovibrio crunogenus (strain DSM 25203 / XCL-2) (Thiomicrospira crunogena).